A 966-amino-acid chain; its full sequence is Aminopeptidase N (966 aa).

Residues 1–8 lie on the Cytoplasmic side of the membrane; sequence MAKGFYIS. Residues 9-32 form a helical; Signal-anchor for type II membrane protein membrane-spanning segment; that stretch reads KTLGILGILLGVAAVCTIIALSVV. The tract at residues 33-68 is cytosolic Ser/Thr-rich junction; the sequence is YAQEKNRNAENSATAPTLPGSTSATTATTTPAVDES. The Extracellular portion of the chain corresponds to 33 to 966; that stretch reads YAQEKNRNAE…VFKWFTENSS (934 aa). The disordered stretch occupies residues 42-64; sequence ENSATAPTLPGSTSATTATTTPA. Over residues 44-64 the composition is skewed to low complexity; sequence SATAPTLPGSTSATTATTTPA. The segment at 69-966 is metalloprotease; that stretch reads KPWNQYRLPK…VFKWFTENSS (898 aa). Residues N106, N114, and N128 are each glycosylated (N-linked (GlcNAc...) asparagine). Y176 is modified (sulfotyrosine). 4 N-linked (GlcNAc...) asparagine glycosylation sites follow: N234, N288, N318, and N332. A substrate-binding site is contributed by 351–355; that stretch reads GAMEN. H387 is a binding site for Zn(2+). E388 (proton acceptor) is an active-site residue. 2 residues coordinate Zn(2+): H391 and E410. Sulfotyrosine is present on residues Y418 and Y423. N573, N606, N624, and N734 each carry an N-linked (GlcNAc...) asparagine glycan. A disulfide bond links C760 and C767. N-linked (GlcNAc...) asparagine glycans are attached at residues N784 and N817. Cysteines 797 and 833 form a disulfide. Phosphotyrosine is present on Y852.

The protein belongs to the peptidase M1 family. As to quaternary structure, homodimer. Interacts with SLC6A19. It depends on Zn(2+) as a cofactor. In terms of processing, N- and O-glycosylated. Sulfated. Post-translationally, may undergo proteolysis and give rise to a soluble form. As to expression, expressed in the intestinal brush border (at protein level). Highly expressed in intestinal tract and kidney, present in liver, lymph node, spleen, and brain. Found as well in monocytes, macrophages, dendritic cells, veiled cells and B-cells but not on T-cells and thymocytes.

The protein localises to the cell membrane. The catalysed reaction is Release of an N-terminal amino acid, Xaa-|-Yaa- from a peptide, amide or arylamide. Xaa is preferably Ala, but may be most amino acids including Pro (slow action). When a terminal hydrophobic residue is followed by a prolyl residue, the two may be released as an intact Xaa-Pro dipeptide.. Its function is as follows. Broad specificity aminopeptidase which plays a role in the final digestion of peptides generated from hydrolysis of proteins by gastric and pancreatic proteases. Also involved in the processing of various peptides including peptide hormones, such as angiotensin III and IV, neuropeptides, and chemokines. May also be involved the cleavage of peptides bound to major histocompatibility complex class II molecules of antigen presenting cells. May have a role in angiogenesis and promote cholesterol crystallization. May have a role in amino acid transport by acting as binding partner of amino acid transporter SLC6A19 and regulating its activity. The protein is Aminopeptidase N (Anpep) of Mus musculus (Mouse).